A 397-amino-acid polypeptide reads, in one-letter code: Succinate--CoA ligase [ADP-forming] subunit beta (397 aa).

Residues 9 to 254 enclose the ATP-grasp domain; sequence KALLKGYGAP…ETEEDAKEIE (246 aa). ATP-binding positions include K46, 53 to 55, E109, A112, and E117; that span reads GRG. Residues N209 and D223 each contribute to the Mg(2+) site. Substrate contacts are provided by residues N274 and 331 to 333; that span reads GIM.

This sequence belongs to the succinate/malate CoA ligase beta subunit family. In terms of assembly, heterotetramer of two alpha and two beta subunits. The cofactor is Mg(2+).

It catalyses the reaction succinate + ATP + CoA = succinyl-CoA + ADP + phosphate. The enzyme catalyses GTP + succinate + CoA = succinyl-CoA + GDP + phosphate. The protein operates within carbohydrate metabolism; tricarboxylic acid cycle; succinate from succinyl-CoA (ligase route): step 1/1. Functionally, succinyl-CoA synthetase functions in the citric acid cycle (TCA), coupling the hydrolysis of succinyl-CoA to the synthesis of either ATP or GTP and thus represents the only step of substrate-level phosphorylation in the TCA. The beta subunit provides nucleotide specificity of the enzyme and binds the substrate succinate, while the binding sites for coenzyme A and phosphate are found in the alpha subunit. This chain is Succinate--CoA ligase [ADP-forming] subunit beta, found in Agrobacterium fabrum (strain C58 / ATCC 33970) (Agrobacterium tumefaciens (strain C58)).